The chain runs to 463 residues: Eukaryotic translation initiation factor 3 subunit E (463 aa).

A PCI domain is found at Phe-224–Ala-407. The disordered stretch occupies residues Gln-432–Ala-463. A compositionally biased stretch (basic and acidic residues) spans Glu-437 to Asn-449.

It belongs to the eIF-3 subunit E family. Component of the eukaryotic translation initiation factor 3 (eIF-3) complex.

Its subcellular location is the cytoplasm. Component of the eukaryotic translation initiation factor 3 (eIF-3) complex, which is involved in protein synthesis of a specialized repertoire of mRNAs and, together with other initiation factors, stimulates binding of mRNA and methionyl-tRNAi to the 40S ribosome. The eIF-3 complex specifically targets and initiates translation of a subset of mRNAs involved in cell proliferation. The protein is Eukaryotic translation initiation factor 3 subunit E of Cryptococcus neoformans var. neoformans serotype D (strain JEC21 / ATCC MYA-565) (Filobasidiella neoformans).